The chain runs to 419 residues: Gamma-glutamyl phosphate reductase (419 aa).

The protein belongs to the gamma-glutamyl phosphate reductase family.

It is found in the cytoplasm. It catalyses the reaction L-glutamate 5-semialdehyde + phosphate + NADP(+) = L-glutamyl 5-phosphate + NADPH + H(+). The protein operates within amino-acid biosynthesis; L-proline biosynthesis; L-glutamate 5-semialdehyde from L-glutamate: step 2/2. Functionally, catalyzes the NADPH-dependent reduction of L-glutamate 5-phosphate into L-glutamate 5-semialdehyde and phosphate. The product spontaneously undergoes cyclization to form 1-pyrroline-5-carboxylate. The polypeptide is Gamma-glutamyl phosphate reductase (Maridesulfovibrio salexigens (strain ATCC 14822 / DSM 2638 / NCIMB 8403 / VKM B-1763) (Desulfovibrio salexigens)).